The sequence spans 449 residues: Intestinal acid phosphatase (449 aa).

The first 19 residues, 1–19 (MVSAISIVAIFALEGFVTT), serve as a signal peptide directing secretion. The Extracellular portion of the chain corresponds to 20–428 (YSDGTKDLVF…TDLNKSSSFA (409 aa)). His-36 acts as the Nucleophile in catalysis. The Proton donor role is filled by Asp-321. A helical membrane pass occupies residues 429 to 449 (TVSMLFIAAILAINNNFLGLF).

It belongs to the histidine acid phosphatase family. As to quaternary structure, homodimer. The N-terminus is blocked. In terms of tissue distribution, expressed in the intestine, specifically on the edge of the gut lumen, in the 14 posterior cells of the intestine.

It localises to the membrane. The catalysed reaction is a phosphate monoester + H2O = an alcohol + phosphate. In terms of biological role, acid phosphatase required for normal growth and development. Specifically required for normal gut differentiation. The sequence is that of Intestinal acid phosphatase from Caenorhabditis elegans.